Here is a 190-residue protein sequence, read N- to C-terminus: Nucleoside triphosphate pyrophosphatase (190 aa).

Asp-69 functions as the Proton acceptor in the catalytic mechanism.

The protein belongs to the Maf family. The cofactor is a divalent metal cation.

Its subcellular location is the cytoplasm. It catalyses the reaction a ribonucleoside 5'-triphosphate + H2O = a ribonucleoside 5'-phosphate + diphosphate + H(+). It carries out the reaction a 2'-deoxyribonucleoside 5'-triphosphate + H2O = a 2'-deoxyribonucleoside 5'-phosphate + diphosphate + H(+). In terms of biological role, nucleoside triphosphate pyrophosphatase. May have a dual role in cell division arrest and in preventing the incorporation of modified nucleotides into cellular nucleic acids. The polypeptide is Nucleoside triphosphate pyrophosphatase (Helicobacter pylori (strain P12)).